Reading from the N-terminus, the 187-residue chain is ATP synthase subunit b (187 aa).

Residues 4-24 form a helical membrane-spanning segment; sequence LALFALLMVPAILLASGHDSG.

Belongs to the ATPase B chain family. As to quaternary structure, F-type ATPases have 2 components, F(1) - the catalytic core - and F(0) - the membrane proton channel. F(1) has five subunits: alpha(3), beta(3), gamma(1), delta(1), epsilon(1). F(0) has three main subunits: a(1), b(2) and c(10-14). The alpha and beta chains form an alternating ring which encloses part of the gamma chain. F(1) is attached to F(0) by a central stalk formed by the gamma and epsilon chains, while a peripheral stalk is formed by the delta and b chains.

Its subcellular location is the cell inner membrane. Functionally, f(1)F(0) ATP synthase produces ATP from ADP in the presence of a proton or sodium gradient. F-type ATPases consist of two structural domains, F(1) containing the extramembraneous catalytic core and F(0) containing the membrane proton channel, linked together by a central stalk and a peripheral stalk. During catalysis, ATP synthesis in the catalytic domain of F(1) is coupled via a rotary mechanism of the central stalk subunits to proton translocation. Component of the F(0) channel, it forms part of the peripheral stalk, linking F(1) to F(0). The sequence is that of ATP synthase subunit b from Sulfurovum sp. (strain NBC37-1).